We begin with the raw amino-acid sequence, 282 residues long: HTH-type transcriptional activator RhaR (282 aa).

An HTH araC/xylS-type domain is found at 179 to 277; it reads DKLITRLAAS…GMTPSQWRHL (99 aa). 2 DNA-binding regions (H-T-H motif) span residues 196 to 217 and 244 to 267; these read DKFCDEASCSERVLRQQFRQQT and ISDISTECGFEDSNYFSVVFTRET.

Binds DNA as a dimer.

It localises to the cytoplasm. Activates expression of the rhaSR operon in response to L-rhamnose. This Escherichia coli O1:K1 / APEC protein is HTH-type transcriptional activator RhaR.